The primary structure comprises 861 residues: Rod cGMP-specific 3',5'-cyclic phosphodiesterase subunit alpha (861 aa).

At G2 the chain carries N-acetylglycine. GAF domains lie at 73 to 222 and 254 to 431; these read QAER…NLIM and DIER…GWSV. The 334-residue stretch at 483-816 folds into the PDEase domain; sequence EEEELAEILQ…KEWKALADEY (334 aa). The Proton donor role is filled by H559. Positions 563, 599, 600, and 720 each coordinate a divalent metal cation. The segment at 821 to 861 is disordered; sequence KALEEEKQKQQTAKQGAAGDQPGGNPSPAGGAPASKSCCIQ. Over residues 830 to 861 the composition is skewed to low complexity; the sequence is QQTAKQGAAGDQPGGNPSPAGGAPASKSCCIQ. Residue C858 is modified to Cysteine methyl ester. Residue C858 is the site of S-farnesyl cysteine attachment. Residues 859 to 861 constitute a propeptide, removed in mature form; it reads CIQ.

The protein belongs to the cyclic nucleotide phosphodiesterase family. In terms of assembly, oligomer composed of two catalytic chains (alpha and beta), an inhibitory chain (gamma) and the delta chain. A divalent metal cation is required as a cofactor.

It localises to the cell membrane. The protein localises to the cell projection. It is found in the cilium. Its subcellular location is the photoreceptor outer segment. The enzyme catalyses 3',5'-cyclic GMP + H2O = GMP + H(+). In terms of biological role, rod-specific cGMP phosphodiesterase that catalyzes the hydrolysis of 3',5'-cyclic GMP. This protein participates in processes of transmission and amplification of the visual signal. The sequence is that of Rod cGMP-specific 3',5'-cyclic phosphodiesterase subunit alpha from Canis lupus familiaris (Dog).